Reading from the N-terminus, the 367-residue chain is Peroxidase 1 (367 aa).

An N-terminal signal peptide occupies residues 1–33 (MAKESKLTAGVAAALTVVAACALCLLLPATARA). Q34 carries the post-translational modification Pyrrolidone carboxylic acid. 4 disulfide bridges follow: C44–C125, C77–C82, C131–C335, and C209–C244. H75 acts as the Proton acceptor in catalysis. 5 residues coordinate Ca(2+): D76, V79, G81, D83, and S85. The N-linked (GlcNAc...) asparagine glycan is linked to N164. Residue P172 participates in substrate binding. Residue H202 coordinates heme b. A Ca(2+)-binding site is contributed by T203. N-linked (GlcNAc...) asparagine glycosylation is found at N218 and N247. Ca(2+) contacts are provided by D259, T262, and D267. N303 carries N-linked (GlcNAc...) asparagine glycosylation.

Belongs to the peroxidase family. Classical plant (class III) peroxidase subfamily. It depends on heme b as a cofactor. Ca(2+) serves as cofactor. As to expression, expressed in the root tip meristems.

The protein localises to the secreted. It is found in the vacuole. It catalyses the reaction 2 a phenolic donor + H2O2 = 2 a phenolic radical donor + 2 H2O. Functionally, removal of H(2)O(2), oxidation of toxic reductants, biosynthesis and degradation of lignin, suberization, auxin catabolism, response to environmental stresses such as wounding, pathogen attack and oxidative stress. These functions might be dependent on each isozyme/isoform in each plant tissue. In Zea mays (Maize), this protein is Peroxidase 1 (PER1).